A 70-amino-acid chain; its full sequence is Probable rubredoxin HupI (70 aa).

One can recognise a Rubredoxin-like domain in the interval 15–66 (DDRMECGICWHVYDPAEGDPVWQIPPGTPFSNLTEDWRCPNCDALQSKFMRL). 4 residues coordinate Fe cation: Cys-20, Cys-23, Cys-53, and Cys-56.

It belongs to the rubredoxin family. The cofactor is Fe(3+).

Functionally, could be an electron transport intermediate in hydrogen oxidation. The chain is Probable rubredoxin HupI (hupI) from Rhizobium leguminosarum bv. viciae.